The primary structure comprises 307 residues: tRNA dimethylallyltransferase (307 aa).

Position 5–12 (5–12) interacts with ATP; the sequence is GPTGTGKS. Position 7–12 (7–12) interacts with substrate; the sequence is TGTGKS.

The protein belongs to the IPP transferase family. Monomer. Requires Mg(2+) as cofactor.

It carries out the reaction adenosine(37) in tRNA + dimethylallyl diphosphate = N(6)-dimethylallyladenosine(37) in tRNA + diphosphate. Functionally, catalyzes the transfer of a dimethylallyl group onto the adenine at position 37 in tRNAs that read codons beginning with uridine, leading to the formation of N6-(dimethylallyl)adenosine (i(6)A). This is tRNA dimethylallyltransferase from Mycobacterium avium (strain 104).